The sequence spans 117 residues: Acidic phospholipase A2 PA-1G (117 aa).

7 disulfides stabilise this stretch: C11-C71, C27-C117, C29-C45, C44-C98, C51-C91, C60-C84, and C78-C89. Positions 28, 30, and 32 each coordinate Ca(2+). H48 is a catalytic residue. A Ca(2+)-binding site is contributed by D49. D92 is a catalytic residue.

This sequence belongs to the phospholipase A2 family. Group I subfamily. D49 sub-subfamily. Ca(2+) is required as a cofactor. In terms of tissue distribution, expressed by the venom gland.

It is found in the secreted. It carries out the reaction a 1,2-diacyl-sn-glycero-3-phosphocholine + H2O = a 1-acyl-sn-glycero-3-phosphocholine + a fatty acid + H(+). In terms of biological role, PLA2 catalyzes the calcium-dependent hydrolysis of the 2-acyl groups in 3-sn-phosphoglycerides. The polypeptide is Acidic phospholipase A2 PA-1G (Pseudechis australis (Mulga snake)).